The sequence spans 731 residues: Putative pentatricopeptide repeat-containing protein At1g17630 (731 aa).

15 PPR repeats span residues 88-118, 122-156, 157-191, 192-222, 223-257, 258-292, 293-327, 328-358, 359-393, 398-432, 433-467, 468-498, 499-533, 534-569, and 570-600; these read SGSL…VSLV, DLRL…GLTG, DGYI…GLKE, NLHV…MPVR, NRMS…EFKP, DEVT…GNAV, SGEA…GFEE, YLPS…IRNK, GIES…NHVC, NVVT…KVLA, NSVT…SMSE, NILV…IRDK, DLIS…GFHP, DGIA…GLEP, and QQEH…MPME. The interval 605–680 is type E motif; that stretch reads VLGALLNSCR…VSGSSWIEVK (76 aa). Residues 681 to 711 form a type E(+) motif region; sequence KKKYKFSSGSIVQSEFETIYPVLEDLVSHML.

The protein belongs to the PPR family. PCMP-E subfamily.

The polypeptide is Putative pentatricopeptide repeat-containing protein At1g17630 (PCMP-E72) (Arabidopsis thaliana (Mouse-ear cress)).